A 261-amino-acid polypeptide reads, in one-letter code: MSFTGIFHFFTNSPCDAAEPWQLGSQDAATPMMQGIIDLHHDIFFFLILILVFVSRILVRALWHFHSKKNPIPQRIVHGTTIEILRTIFPSIIPMFIAIPSFALLYSMDEVVVDPAMTIKAIGHQWYRTYEYSDYNSSDEQSLTFDSYTIPEDDPELGQSRLLEVDNRVVVPAKTHLRIIVTSADVPHSWAVPSSGVKCDAVPGRLNQISISVQREGVYYGQCSEICGTNHAFTPIVVEAVSRKDYGSRVSNQLIPQTGEA.

Residues M1 to Q34 lie on the Mitochondrial intermembrane side of the membrane. The chain crosses the membrane as a helical span at residues G35 to S55. Over R56–T87 the chain is Mitochondrial matrix. The chain crosses the membrane as a helical span at residues I88–M108. At D109 to A261 the chain is on the mitochondrial intermembrane side. Residues H188, C223, E225, C227, and H231 each contribute to the Cu cation site. Residue E225 coordinates Mg(2+).

This sequence belongs to the cytochrome c oxidase subunit 2 family. In terms of assembly, component of the cytochrome c oxidase (complex IV, CIV), a multisubunit enzyme composed of a catalytic core of 3 subunits and several supernumerary subunits. The complex exists as a monomer or a dimer and forms supercomplexes (SCs) in the inner mitochondrial membrane with ubiquinol-cytochrome c oxidoreductase (cytochrome b-c1 complex, complex III, CIII). Requires Cu cation as cofactor.

It is found in the mitochondrion inner membrane. It carries out the reaction 4 Fe(II)-[cytochrome c] + O2 + 8 H(+)(in) = 4 Fe(III)-[cytochrome c] + 2 H2O + 4 H(+)(out). Functionally, component of the cytochrome c oxidase, the last enzyme in the mitochondrial electron transport chain which drives oxidative phosphorylation. The respiratory chain contains 3 multisubunit complexes succinate dehydrogenase (complex II, CII), ubiquinol-cytochrome c oxidoreductase (cytochrome b-c1 complex, complex III, CIII) and cytochrome c oxidase (complex IV, CIV), that cooperate to transfer electrons derived from NADH and succinate to molecular oxygen, creating an electrochemical gradient over the inner membrane that drives transmembrane transport and the ATP synthase. Cytochrome c oxidase is the component of the respiratory chain that catalyzes the reduction of oxygen to water. Electrons originating from reduced cytochrome c in the intermembrane space (IMS) are transferred via the dinuclear copper A center (CU(A)) of subunit 2 and heme A of subunit 1 to the active site in subunit 1, a binuclear center (BNC) formed by heme A3 and copper B (CU(B)). The BNC reduces molecular oxygen to 2 water molecules using 4 electrons from cytochrome c in the IMS and 4 protons from the mitochondrial matrix. In Daucus carota (Wild carrot), this protein is Cytochrome c oxidase subunit 2 (COX2).